The following is a 189-amino-acid chain: Protein GrpE (189 aa).

Residues 1–14 (MTDHTPLQPKHEIT) show a composition bias toward basic and acidic residues. The disordered stretch occupies residues 1–23 (MTDHTPLQPKHEITDQADQDTSA).

Belongs to the GrpE family. Homodimer.

It is found in the cytoplasm. Participates actively in the response to hyperosmotic and heat shock by preventing the aggregation of stress-denatured proteins, in association with DnaK and GrpE. It is the nucleotide exchange factor for DnaK and may function as a thermosensor. Unfolded proteins bind initially to DnaJ; upon interaction with the DnaJ-bound protein, DnaK hydrolyzes its bound ATP, resulting in the formation of a stable complex. GrpE releases ADP from DnaK; ATP binding to DnaK triggers the release of the substrate protein, thus completing the reaction cycle. Several rounds of ATP-dependent interactions between DnaJ, DnaK and GrpE are required for fully efficient folding. This Lawsonia intracellularis (strain PHE/MN1-00) protein is Protein GrpE.